We begin with the raw amino-acid sequence, 366 residues long: Chorismate synthase (366 aa).

Arg48 and Arg54 together coordinate NADP(+). Residues 125–127 (RSS), 237–238 (NA), Gly277, 292–296 (KPTSS), and Arg318 each bind FMN.

This sequence belongs to the chorismate synthase family. Homotetramer. The cofactor is FMNH2.

The catalysed reaction is 5-O-(1-carboxyvinyl)-3-phosphoshikimate = chorismate + phosphate. Its pathway is metabolic intermediate biosynthesis; chorismate biosynthesis; chorismate from D-erythrose 4-phosphate and phosphoenolpyruvate: step 7/7. Functionally, catalyzes the anti-1,4-elimination of the C-3 phosphate and the C-6 proR hydrogen from 5-enolpyruvylshikimate-3-phosphate (EPSP) to yield chorismate, which is the branch point compound that serves as the starting substrate for the three terminal pathways of aromatic amino acid biosynthesis. This reaction introduces a second double bond into the aromatic ring system. This is Chorismate synthase from Acidovorax sp. (strain JS42).